Here is a 118-residue protein sequence, read N- to C-terminus: MVTPAGCLGGRNQGPREIPGTAFPCSSRAGQTGQAVSGAQVSSWRERQPFGGSRGPLHILGTDGNVDTTGKLGLVPTPPRIQKETKQGALCGMKPPFLPEALLTVWWLPFVAVSLCLF.

A disordered region spans residues 1–64 (MVTPAGCLGG…GPLHILGTDG (64 aa)). Residues 28-43 (RAGQTGQAVSGAQVSS) are compositionally biased toward polar residues.

This chain is Putative cytochrome P450 family member 4F30 (CYP4F30P), found in Homo sapiens (Human).